We begin with the raw amino-acid sequence, 485 residues long: Glutamyl-tRNA(Gln) amidotransferase subunit A (485 aa).

Active-site charge relay system residues include K79 and S154. S178 functions as the Acyl-ester intermediate in the catalytic mechanism.

The protein belongs to the amidase family. GatA subfamily. In terms of assembly, heterotrimer of A, B and C subunits.

The enzyme catalyses L-glutamyl-tRNA(Gln) + L-glutamine + ATP + H2O = L-glutaminyl-tRNA(Gln) + L-glutamate + ADP + phosphate + H(+). Functionally, allows the formation of correctly charged Gln-tRNA(Gln) through the transamidation of misacylated Glu-tRNA(Gln) in organisms which lack glutaminyl-tRNA synthetase. The reaction takes place in the presence of glutamine and ATP through an activated gamma-phospho-Glu-tRNA(Gln). The protein is Glutamyl-tRNA(Gln) amidotransferase subunit A of Clostridium botulinum (strain ATCC 19397 / Type A).